A 591-amino-acid polypeptide reads, in one-letter code: Formate--tetrahydrofolate ligase (591 aa).

Residue 74–81 (TPLGEGKS) coordinates ATP.

It belongs to the formate--tetrahydrofolate ligase family.

The enzyme catalyses (6S)-5,6,7,8-tetrahydrofolate + formate + ATP = (6R)-10-formyltetrahydrofolate + ADP + phosphate. It functions in the pathway one-carbon metabolism; tetrahydrofolate interconversion. The sequence is that of Formate--tetrahydrofolate ligase from Desulforapulum autotrophicum (strain ATCC 43914 / DSM 3382 / VKM B-1955 / HRM2) (Desulfobacterium autotrophicum).